The sequence spans 319 residues: Lipoyl synthase (319 aa).

The disordered stretch occupies residues 6–29 (DTVSANPVRPRHPEKAARPDALSP). The segment covering 16 to 29 (RHPEKAARPDALSP) has biased composition (basic and acidic residues). Residues C61, C66, C72, C87, C91, C94, and S300 each contribute to the [4Fe-4S] cluster site. Residues 73-289 (WDKKHATFMI…QTTAYAKGFL (217 aa)) enclose the Radical SAM core domain.

The protein belongs to the radical SAM superfamily. Lipoyl synthase family. It depends on [4Fe-4S] cluster as a cofactor.

The protein resides in the cytoplasm. It carries out the reaction [[Fe-S] cluster scaffold protein carrying a second [4Fe-4S](2+) cluster] + N(6)-octanoyl-L-lysyl-[protein] + 2 oxidized [2Fe-2S]-[ferredoxin] + 2 S-adenosyl-L-methionine + 4 H(+) = [[Fe-S] cluster scaffold protein] + N(6)-[(R)-dihydrolipoyl]-L-lysyl-[protein] + 4 Fe(3+) + 2 hydrogen sulfide + 2 5'-deoxyadenosine + 2 L-methionine + 2 reduced [2Fe-2S]-[ferredoxin]. It functions in the pathway protein modification; protein lipoylation via endogenous pathway; protein N(6)-(lipoyl)lysine from octanoyl-[acyl-carrier-protein]: step 2/2. Its function is as follows. Catalyzes the radical-mediated insertion of two sulfur atoms into the C-6 and C-8 positions of the octanoyl moiety bound to the lipoyl domains of lipoate-dependent enzymes, thereby converting the octanoylated domains into lipoylated derivatives. The polypeptide is Lipoyl synthase (Rhodopseudomonas palustris (strain ATCC BAA-98 / CGA009)).